The following is a 400-amino-acid chain: Axin-like protein 1 (400 aa).

The RGS domain maps to 4 to 132 (RSKFSIDRVL…TTTADVNTTW (129 aa)). Disordered regions lie at residues 190–233 (QETK…TLKV) and 278–306 (GTLE…GSEA). Over residues 194–210 (NSSETEEHAESPRKEKS) the composition is skewed to basic and acidic residues. Residues 287–298 (FTGTNNGFSTLQ) are compositionally biased toward polar residues. The 88-residue stretch at 305–392 (EAPKMTVELR…RITAICRMCP (88 aa)) folds into the DIX domain.

As to quaternary structure, interacts with bar-1, dsh-2, gsk-3, and mig-5.

In terms of biological role, works in parallel with pry-1 in negatively regulating bar-1 signaling in vulval precursor cells and Q neuroblasts. Shown to have a role in excretory cell development. The sequence is that of Axin-like protein 1 from Caenorhabditis elegans.